Here is an 80-residue protein sequence, read N- to C-terminus: WAP four-disulfide core domain protein 15B (80 aa).

An N-terminal signal peptide occupies residues 1 to 20; it reads MKLLGLSLLAVTILLCCNMA. The WAP domain occupies 29–76; that stretch reads VFSKPGYCPEYRVPCPFVLIPKCRRDKGCKDALKCCFFYCQMRCVDPW. Intrachain disulfides connect Cys-36–Cys-64, Cys-43–Cys-68, Cys-51–Cys-63, and Cys-57–Cys-72.

In terms of tissue distribution, constitutively expressed in kidney and epididymis.

It localises to the secreted. In terms of biological role, antibacterial protein which inhibits the growth of E.coli and S.aureus. In Mus musculus (Mouse), this protein is WAP four-disulfide core domain protein 15B (Wfdc15b).